A 335-amino-acid polypeptide reads, in one-letter code: DNA-directed RNA polymerase subunit alpha (335 aa).

Positions methionine 1–serine 248 are alpha N-terminal domain (alpha-NTD). An alpha C-terminal domain (alpha-CTD) region spans residues lysine 256 to alanine 335.

The protein belongs to the RNA polymerase alpha chain family. As to quaternary structure, in cyanobacteria the RNAP catalytic core is composed of 2 alpha, 1 beta, 1 beta', 1 gamma and 1 omega subunit. When a sigma factor is associated with the core the holoenzyme is formed, which can initiate transcription.

The catalysed reaction is RNA(n) + a ribonucleoside 5'-triphosphate = RNA(n+1) + diphosphate. Its function is as follows. DNA-dependent RNA polymerase catalyzes the transcription of DNA into RNA using the four ribonucleoside triphosphates as substrates. The sequence is that of DNA-directed RNA polymerase subunit alpha from Synechococcus sp. (strain JA-2-3B'a(2-13)) (Cyanobacteria bacterium Yellowstone B-Prime).